We begin with the raw amino-acid sequence, 158 residues long: Protein EOLA1 (158 aa).

Positions 6–92 (LSFRQPYAGF…IAGLVDIGET (87 aa)) constitute an ASCH domain.

It belongs to the EOLA family. In terms of assembly, interacts with MT2A. In terms of tissue distribution, expressed primarily in heart, skeletal muscle, kidney, liver and placenta. Relatively high level of expression in spleen, colon and small intestine. Almost no expression in brain, thymus, lung and peripheral blood leukocytes. Expressed in epithelial cells (at protein level).

Its function is as follows. May play a role in cell protection during the inflammatory response. In epithelial cells, negatively regulates IL6 production and apoptosis through the regulation of MT2A expression. The sequence is that of Protein EOLA1 from Homo sapiens (Human).